The chain runs to 62 residues: DNA gyrase inhibitor YacG (62 aa).

The Zn(2+) site is built by C9, C12, C27, and C31. Basic and acidic residues predominate over residues 43–53 (GYRIPGEKAPE). The interval 43 to 62 (GYRIPGEKAPESGDEEPGDE) is disordered.

It belongs to the DNA gyrase inhibitor YacG family. Interacts with GyrB. The cofactor is Zn(2+).

In terms of biological role, inhibits all the catalytic activities of DNA gyrase by preventing its interaction with DNA. Acts by binding directly to the C-terminal domain of GyrB, which probably disrupts DNA binding by the gyrase. The polypeptide is DNA gyrase inhibitor YacG (Citrifermentans bemidjiense (strain ATCC BAA-1014 / DSM 16622 / JCM 12645 / Bem) (Geobacter bemidjiensis)).